A 217-amino-acid chain; its full sequence is Putative threonylcarbamoyl-AMP synthase (217 aa).

The region spanning 14 to 199 is the YrdC-like domain; it reads SRGIVSAVGA…TPRVLRPGPV (186 aa).

This sequence belongs to the SUA5 family.

It is found in the cytoplasm. The catalysed reaction is L-threonine + hydrogencarbonate + ATP = L-threonylcarbamoyladenylate + diphosphate + H2O. Required for the formation of a threonylcarbamoyl group on adenosine at position 37 (t(6)A37) in tRNAs that read codons beginning with adenine. Catalyzes the conversion of L-threonine, HCO(3)(-)/CO(2) and ATP to give threonylcarbamoyl-AMP (TC-AMP) as the acyladenylate intermediate, with the release of diphosphate. This is Putative threonylcarbamoyl-AMP synthase from Mycobacterium tuberculosis (strain CDC 1551 / Oshkosh).